A 58-amino-acid polypeptide reads, in one-letter code: MSKTVVRKNESLEDALRRFKRSVSKSGTIQEVRKREFYEKPSVKRKKKSEAARKRKFK.

The protein belongs to the bacterial ribosomal protein bS21 family.

This chain is Small ribosomal subunit protein bS21, found in Staphylococcus aureus (strain bovine RF122 / ET3-1).